The sequence spans 97 residues: YcgL domain-containing protein Pmen_1774 (97 aa).

The 85-residue stretch at 3 to 87 (RICSIYKSPR…PEEDYIQHLP (85 aa)) folds into the YcgL domain.

The sequence is that of YcgL domain-containing protein Pmen_1774 from Ectopseudomonas mendocina (strain ymp) (Pseudomonas mendocina).